The sequence spans 430 residues: Dihydroorotase (430 aa).

Zn(2+) contacts are provided by His61 and His63. Substrate contacts are provided by residues 63-65 and Asn95; that span reads HLR. The Zn(2+) site is built by Asp153, His180, and His233. Position 279 (Asn279) interacts with substrate. Zn(2+) is bound at residue Asp306. Asp306 is an active-site residue. Substrate is bound at residue His310.

This sequence belongs to the metallo-dependent hydrolases superfamily. DHOase family. Class I DHOase subfamily. Zn(2+) serves as cofactor.

It carries out the reaction (S)-dihydroorotate + H2O = N-carbamoyl-L-aspartate + H(+). It participates in pyrimidine metabolism; UMP biosynthesis via de novo pathway; (S)-dihydroorotate from bicarbonate: step 3/3. Catalyzes the reversible cyclization of carbamoyl aspartate to dihydroorotate. The protein is Dihydroorotase of Caldicellulosiruptor saccharolyticus (strain ATCC 43494 / DSM 8903 / Tp8T 6331).